A 392-amino-acid chain; its full sequence is Phosphoglycerate kinase (392 aa).

Residues 21–23, Arg36, 59–62, Arg113, and Arg146 contribute to the substrate site; these read DLN and HLGR. ATP contacts are provided by residues Lys197, Glu319, and 345-348; that span reads GGDT.

The protein belongs to the phosphoglycerate kinase family. In terms of assembly, monomer.

Its subcellular location is the cytoplasm. The enzyme catalyses (2R)-3-phosphoglycerate + ATP = (2R)-3-phospho-glyceroyl phosphate + ADP. The protein operates within carbohydrate degradation; glycolysis; pyruvate from D-glyceraldehyde 3-phosphate: step 2/5. The sequence is that of Phosphoglycerate kinase from Alkalilimnicola ehrlichii (strain ATCC BAA-1101 / DSM 17681 / MLHE-1).